We begin with the raw amino-acid sequence, 328 residues long: Olfactory receptor 13A1 (328 aa).

The Extracellular portion of the chain corresponds to 1–43; it reads MKLWMESHLIVPETRPSPRMMSNQTLVTEFILQGFSEHPEYRV. Residue asparagine 23 is glycosylated (N-linked (GlcNAc...) asparagine). A helical transmembrane segment spans residues 44–64; that stretch reads FLFSCFLFLYSGALTGNVLIT. The Cytoplasmic segment spans residues 65–72; it reads LAITFNPG. Residues 73-93 form a helical membrane-spanning segment; sequence LHAPMYFFLLNLATMDIICTS. Topologically, residues 94 to 117 are extracellular; the sequence is SIMPKALASLVSEESSISYGGCMA. A disulfide bridge connects residues cysteine 115 and cysteine 207. Residues 118–138 form a helical membrane-spanning segment; the sequence is QLYFLTWAASSELLLLTVMAY. At 139–157 the chain is on the cytoplasmic side; it reads DRYAAICHPLHYSSMMSKV. Residues 158–178 form a helical membrane-spanning segment; that stretch reads FCSGLATAVWLLCAVNTAIHT. The Extracellular segment spans residues 179 to 215; the sequence is GLMLRLDFCGPNVIIHFFCEVPPLLLLSCSSTYVNGV. The helical transmembrane segment at 216–235 threads the bilayer; it reads MIVLADAFYGIVNFLMTIAS. Over 236-255 the chain is Cytoplasmic; that stretch reads YGFIVSSILKVKTAWGRQKA. A helical transmembrane segment spans residues 256-276; it reads FSTCSSHLTVVCMYYTAVFYA. At 277-289 the chain is on the extracellular side; it reads YISPVSGYSAGKS. A helical membrane pass occupies residues 290–310; that stretch reads KLAGLLYTVLSPTLNPLIYTL. Residues 311–328 are Cytoplasmic-facing; the sequence is RNKEVKAALRKLFPFFRN.

This sequence belongs to the G-protein coupled receptor 1 family.

The protein resides in the cell membrane. Its function is as follows. Odorant receptor. This chain is Olfactory receptor 13A1 (OR13A1), found in Homo sapiens (Human).